A 408-amino-acid chain; its full sequence is LL-diaminopimelate aminotransferase (408 aa).

Residues Tyr15 and Gly42 each contribute to the substrate site. Residues Tyr72, 108-109 (SK), Tyr132, Asn187, Tyr218, and 246-248 (SFS) each bind pyridoxal 5'-phosphate. Substrate is bound by residues Lys109, Tyr132, and Asn187. Position 249 is an N6-(pyridoxal phosphate)lysine (Lys249). Residues Arg257 and Asn292 each contribute to the pyridoxal 5'-phosphate site. 2 residues coordinate substrate: Asn292 and Arg388.

It belongs to the class-I pyridoxal-phosphate-dependent aminotransferase family. LL-diaminopimelate aminotransferase subfamily. In terms of assembly, homodimer. The cofactor is pyridoxal 5'-phosphate.

It carries out the reaction (2S,6S)-2,6-diaminopimelate + 2-oxoglutarate = (S)-2,3,4,5-tetrahydrodipicolinate + L-glutamate + H2O + H(+). Its pathway is amino-acid biosynthesis; L-lysine biosynthesis via DAP pathway; LL-2,6-diaminopimelate from (S)-tetrahydrodipicolinate (aminotransferase route): step 1/1. Functionally, involved in the synthesis of meso-diaminopimelate (m-DAP or DL-DAP), required for both lysine and peptidoglycan biosynthesis. Catalyzes the direct conversion of tetrahydrodipicolinate to LL-diaminopimelate. The polypeptide is LL-diaminopimelate aminotransferase (Parasynechococcus marenigrum (strain WH8102)).